A 251-amino-acid polypeptide reads, in one-letter code: Ubiquinone/menaquinone biosynthesis C-methyltransferase UbiE (251 aa).

S-adenosyl-L-methionine-binding positions include threonine 74, aspartate 95, 123 to 124, and serine 140; that span reads NA.

This sequence belongs to the class I-like SAM-binding methyltransferase superfamily. MenG/UbiE family.

It catalyses the reaction a 2-demethylmenaquinol + S-adenosyl-L-methionine = a menaquinol + S-adenosyl-L-homocysteine + H(+). It carries out the reaction a 2-methoxy-6-(all-trans-polyprenyl)benzene-1,4-diol + S-adenosyl-L-methionine = a 5-methoxy-2-methyl-3-(all-trans-polyprenyl)benzene-1,4-diol + S-adenosyl-L-homocysteine + H(+). Its pathway is quinol/quinone metabolism; menaquinone biosynthesis; menaquinol from 1,4-dihydroxy-2-naphthoate: step 2/2. The protein operates within cofactor biosynthesis; ubiquinone biosynthesis. Functionally, methyltransferase required for the conversion of demethylmenaquinol (DMKH2) to menaquinol (MKH2) and the conversion of 2-polyprenyl-6-methoxy-1,4-benzoquinol (DDMQH2) to 2-polyprenyl-3-methyl-6-methoxy-1,4-benzoquinol (DMQH2). The protein is Ubiquinone/menaquinone biosynthesis C-methyltransferase UbiE of Yersinia pestis bv. Antiqua (strain Antiqua).